Reading from the N-terminus, the 528-residue chain is Apolipoprotein N-acyltransferase (528 aa).

A run of 5 helical transmembrane segments spans residues 8-28 (IMLLAGWRRALLAIASGAVGA), 69-89 (AFWIGWLFGFGYFVAGLWWLG), 99-119 (FAWALPLAVLGLPAVLAVFYG), 178-198 (VLGLFGVSALAVFVFAAPALL), and 203-223 (GAKLGLALAGILFCGHLGYGA). A CN hydrolase domain is found at 241–490 (VQPNIDQAAK…EGVENATFTL (250 aa)). Residue Glu285 is the Proton acceptor of the active site. Lys349 is an active-site residue. Cys402 (nucleophile) is an active-site residue.

The protein belongs to the CN hydrolase family. Apolipoprotein N-acyltransferase subfamily.

The protein resides in the cell inner membrane. The enzyme catalyses N-terminal S-1,2-diacyl-sn-glyceryl-L-cysteinyl-[lipoprotein] + a glycerophospholipid = N-acyl-S-1,2-diacyl-sn-glyceryl-L-cysteinyl-[lipoprotein] + a 2-acyl-sn-glycero-3-phospholipid + H(+). It participates in protein modification; lipoprotein biosynthesis (N-acyl transfer). In terms of biological role, catalyzes the phospholipid dependent N-acylation of the N-terminal cysteine of apolipoprotein, the last step in lipoprotein maturation. The protein is Apolipoprotein N-acyltransferase of Allorhizobium ampelinum (strain ATCC BAA-846 / DSM 112012 / S4) (Agrobacterium vitis (strain S4)).